We begin with the raw amino-acid sequence, 326 residues long: Glutaredoxin 3 (326 aa).

Residues 1–108 form the Thioredoxin domain; sequence MANFTDAASL…LTNKVQRLGS (108 aa). 2 consecutive Glutaredoxin domains span residues 125–227 and 227–326; these read NQRL…VSLE and ENRL…KGEN. [2Fe-2S] cluster is bound by residues cysteine 150 and cysteine 252.

Homodimer; the homodimer is independent of 2Fe-2S clusters. Heterotrimer; forms a heterotrimeric complex composed by two bola2 molecules and one glrx3 molecule; linked by [2Fe-2S] clusters.

Its subcellular location is the cytoplasm. The protein resides in the cytosol. Functionally, together with bola2, acts as a cytosolic iron-sulfur (Fe-S) cluster assembly factor that facilitates [2Fe-2S] cluster insertion into a subset of cytosolic proteins. Required for hemoglobin maturation. Does not possess any thyoredoxin activity since it lacks the conserved motif that is essential for catalytic activity. The sequence is that of Glutaredoxin 3 (glrx3) from Danio rerio (Zebrafish).